We begin with the raw amino-acid sequence, 567 residues long: Septation ring formation regulator EzrA (567 aa).

The Extracellular segment spans residues 1–2; that stretch reads ME. Residues 3 to 21 form a helical membrane-spanning segment; sequence FIIGLIVILLALFSVGYFL. Residues 22–567 lie on the Cytoplasmic side of the membrane; the sequence is RKNIYKEIDR…AQQEKEYQHQ (546 aa). Coiled coils occupy residues 108–185, 243–375, and 402–529; these read IEDL…YEEE, KGYK…RDHV, and KGHL…ERRF.

It belongs to the EzrA family.

The protein resides in the cell membrane. Functionally, negative regulator of FtsZ ring formation; modulates the frequency and position of FtsZ ring formation. Inhibits FtsZ ring formation at polar sites. Interacts either with FtsZ or with one of its binding partners to promote depolymerization. This Bacillus pumilus (strain SAFR-032) protein is Septation ring formation regulator EzrA.